The primary structure comprises 356 residues: GDP-mannose:di-myo-inositol-1,3'-phosphate beta-1,2-mannosyltransferase (356 aa).

The protein belongs to the MDIP synthase family. It depends on Mg(2+) as a cofactor.

It catalyses the reaction bis(myo-inositol) 1,3'-phosphate + GDP-alpha-D-mannose = 2-O-(beta-D-mannosyl)-bis(myo-inositol) 1,3'-phosphate + GDP + H(+). The enzyme catalyses 2-O-(beta-D-mannosyl)-bis(myo-inositol) 1,3'-phosphate + GDP-alpha-D-mannose = 2-O-(beta-D-mannosyl-(1-&gt;2)-beta-D-mannosyl)-bis(myo-inositol) 1,3'-phosphate + GDP + H(+). It carries out the reaction bis(myo-inositol) 1,3'-phosphate + 2 GDP-alpha-D-mannose = 2-O-(beta-D-mannosyl-(1-&gt;2)-beta-D-mannosyl)-bis(myo-inositol) 1,3'-phosphate + 2 GDP + 2 H(+). Its function is as follows. Catalyzes the transfer of the mannosyl group from GDP-mannose to di-myo-inositol-1,3'-phosphate (DIP), producing mannosyl-di-myo-inositol phosphate (MDIP). Can also use MDIP as an acceptor of a second mannose residue, yielding di-mannosyl-di-myo-inositol phosphate (MMDIP). The sequence is that of GDP-mannose:di-myo-inositol-1,3'-phosphate beta-1,2-mannosyltransferase from Aquifex aeolicus (strain VF5).